Reading from the N-terminus, the 530-residue chain is MMLTSAILLLTLGVQLSHADDSSRENFSNRCDQLAKEIHIPNVTVNFVEYVANGTNVTLADNPPSCGQSNQVVLADLCRVAMEVTTSNQSQITLEAWFPENYTGRFLSTGNGGLAGCIQYVDMAYASSMGFATVGANGGHNGTSGESFYHNPDIVEDLSWRSVHTGVVVGKELTKKFYHEGFHKSYYLGCSTGGRQGFKAVQEFVHDFDGVVAGCPAFNFVNLNSWSGHFYPITGNSSADTFLTTAQWTLVQQSVMEQCDSLDGAVDGVIEAIDQCHPVFEQLICRPGQNASECLTGKQVNTAQLVLSPIYGTKGEFLYPRMQPGVENVDMYITYNGDPFAYSTDWYKYVVFSDPNWDPATLNAQDYEIALAQNPSNIQTFEGDLSAFRDAGAKVLTYHGTADPIITGETSKVYYRHVAETMNAAPEELDEFYRYFRIGGMSHCGGGTGATAIGNVLSAQWSNDPDANVLMAMVRWVEEGVAPEYIRGASLGSGPGAKVEYTRRHCKYPTRNVYVGPGNWTDENAWKCIL.

The signal sequence occupies residues 1-25; that stretch reads MMLTSAILLLTLGVQLSHADDSSRE. Disulfide bonds link C31–C78, C66–C117, C190–C444, C259–C276, C285–C294, and C506–C528. The active-site Acyl-ester intermediate is the S191. Ca(2+) is bound by residues D260, D263, A265, D267, and V269. Residues D403 and H443 each act as charge relay system in the active site.

The protein belongs to the tannase family.

It is found in the secreted. It catalyses the reaction feruloyl-polysaccharide + H2O = ferulate + polysaccharide.. In terms of biological role, involved in degradation of plant cell walls. Hydrolyzes the feruloyl-arabinose ester bond in arabinoxylans as well as the feruloyl-galactose and feruloyl-arabinose ester bonds in pectin. Active against methyl esters of sinapate (MSA) and caffeate (MCA). The sequence is that of Feruloyl esterase C (faeC) from Talaromyces stipitatus (strain ATCC 10500 / CBS 375.48 / QM 6759 / NRRL 1006) (Penicillium stipitatum).